The sequence spans 245 residues: 1-(5-phosphoribosyl)-5-[(5-phosphoribosylamino)methylideneamino] imidazole-4-carboxamide isomerase (245 aa).

D11 acts as the Proton acceptor in catalysis. The Proton donor role is filled by D132.

This sequence belongs to the HisA/HisF family.

It is found in the cytoplasm. It catalyses the reaction 1-(5-phospho-beta-D-ribosyl)-5-[(5-phospho-beta-D-ribosylamino)methylideneamino]imidazole-4-carboxamide = 5-[(5-phospho-1-deoxy-D-ribulos-1-ylimino)methylamino]-1-(5-phospho-beta-D-ribosyl)imidazole-4-carboxamide. Its pathway is amino-acid biosynthesis; L-histidine biosynthesis; L-histidine from 5-phospho-alpha-D-ribose 1-diphosphate: step 4/9. The protein is 1-(5-phosphoribosyl)-5-[(5-phosphoribosylamino)methylideneamino] imidazole-4-carboxamide isomerase of Geobacillus kaustophilus (strain HTA426).